The following is a 527-amino-acid chain: EGF domain-specific O-linked N-acetylglucosamine transferase (527 aa).

A signal peptide spans 1–17; it reads MFMLLVFGALLPEVPLS. The short motif at 295-297 is the Required for optimal activity element; it reads DYD. The N-linked (GlcNAc...) asparagine glycan is linked to Asn354. Residues 524-527 carry the Prevents secretion from ER motif; it reads HDEL.

Belongs to the glycosyltransferase 61 family.

It localises to the endoplasmic reticulum lumen. The enzyme catalyses L-seryl-[protein] + UDP-N-acetyl-alpha-D-glucosamine = 3-O-(N-acetyl-beta-D-glucosaminyl)-L-seryl-[protein] + UDP + H(+). It catalyses the reaction L-threonyl-[protein] + UDP-N-acetyl-alpha-D-glucosamine = 3-O-(N-acetyl-beta-D-glucosaminyl)-L-threonyl-[protein] + UDP + H(+). Functionally, catalyzes the transfer of a single N-acetylglucosamine from UDP-GlcNAc to a serine or threonine residue in extracellular proteins resulting in their modification with a beta-linked N-acetylglucosamine (O-GlcNAc). Specifically glycosylates the Thr residue located between the fifth and sixth conserved cysteines of folded EGF-like domains. This chain is EGF domain-specific O-linked N-acetylglucosamine transferase (EOGT), found in Bos taurus (Bovine).